The following is a 529-amino-acid chain: Sodium/hydrogen exchanger 4 (529 aa).

Topologically, residues 1-19 (MSIGLTEFVTNKLAAEHPQ) are cytoplasmic. Residues 20-40 (VIPISVFIAILCLCLVIGHLL) form a helical membrane-spanning segment. The Vacuolar portion of the chain corresponds to 41–45 (EENRW). The helical transmembrane segment at 46-66 (VNESITAILVGAASGTVILLI) threads the bilayer. The Cytoplasmic segment spans residues 67–73 (SKGKSSH). The helical intramembrane region spans 74-94 (ILVFDEELFFIYLLPPIIFNA). The Cytoplasmic segment spans residues 95 to 112 (GFQVKKKKFFHNFLTIMS). The chain crosses the membrane as a helical span at residues 113–133 (FGVIGVFISTVIISFGTWWLF). Residues 134–171 (PKLGFKGLSARDYLAIGTIFSSTDTVCTLQILHQDETP) lie on the Vacuolar side of the membrane. Residues 172–192 (LLYSLVFGEGVVNDATSVVLF) traverse the membrane as a helical segment. The Cytoplasmic segment spans residues 193-214 (NAVQKIQFESLTGWTALQVFGN). A helical transmembrane segment spans residues 215 to 235 (FLYLFSTSTLLGIGVGLITSF). The Vacuolar segment spans residues 236–250 (VLKTLYFGRHSTTRE). A helical membrane pass occupies residues 251–267 (LAIMVLMAYLSYMLAEL). The Cytoplasmic portion of the chain corresponds to 268–273 (FSLSGI). A helical transmembrane segment spans residues 274-291 (LTVFFCGVLMSHYASYNV). At 292–301 (TESSRITSRH) the chain is on the vacuolar side. The helical transmembrane segment at 302 to 322 (VFAMLSFIAETFIFLYVGTDA) threads the bilayer. The Cytoplasmic segment spans residues 323–342 (LDFTKWKTSSLSFGGTLGVS). The chain crosses the membrane as a helical span at residues 343–363 (GVITALVLLGRAAFVFPLSVL). Residues 364–380 (TNFMNRHTERNESITFK) lie on the Vacuolar side of the membrane. An N-linked (GlcNAc...) asparagine glycan is attached at N374. The helical transmembrane segment at 381-401 (HQVIIWWAGLMRGAVSIALAF) threads the bilayer. Residues 402–415 (KQFTYSGVTLDPVN) lie on the Cytoplasmic side of the membrane. Residues 416–436 (AAMVTNTTIVVLFTTLVFGFL) traverse the membrane as a helical segment. The Vacuolar portion of the chain corresponds to 437–529 (TKPLVNYLLP…GPRRENQPEC (93 aa)).

This sequence belongs to the monovalent cation:proton antiporter 1 (CPA1) transporter (TC 2.A.36) family. As to expression, expressed at very low levels in roots and shoots.

It localises to the vacuole membrane. The enzyme catalyses Na(+)(in) + H(+)(out) = Na(+)(out) + H(+)(in). It carries out the reaction K(+)(in) + H(+)(out) = K(+)(out) + H(+)(in). Its function is as follows. May act in low affinity electroneutral exchange of protons for cations such as Na(+) or K(+) across membranes. May also exchange Li(+) and Cs(+) with a lower affinity. The polypeptide is Sodium/hydrogen exchanger 4 (NHX4) (Arabidopsis thaliana (Mouse-ear cress)).